The following is an 83-amino-acid chain: Putative defensin-like protein 111 (83 aa).

Residues Met-1–Cys-24 form the signal peptide. Cystine bridges form between Cys-40–Cys-80, Cys-46–Cys-69, Cys-54–Cys-78, and Cys-58–Cys-79.

Belongs to the DEFL family.

Its subcellular location is the secreted. The protein is Putative defensin-like protein 111 (LCR50) of Arabidopsis thaliana (Mouse-ear cress).